We begin with the raw amino-acid sequence, 267 residues long: uncharacterized protein (267 aa).

This is an uncharacterized protein from Escherichia coli (strain K12).